Consider the following 284-residue polypeptide: Fructosamine kinase FrlD (284 aa).

This sequence belongs to the carbohydrate kinase PfkB family.

In terms of biological role, catalyzes the phosphorylation of a range of fructosamines to fructosamine 6-phosphates. This is Fructosamine kinase FrlD (frlD) from Bacillus subtilis (strain 168).